A 122-amino-acid polypeptide reads, in one-letter code: Large ribosomal subunit protein uL14 (122 aa).

It belongs to the universal ribosomal protein uL14 family. In terms of assembly, part of the 50S ribosomal subunit. Forms a cluster with proteins L3 and L19. In the 70S ribosome, L14 and L19 interact and together make contacts with the 16S rRNA in bridges B5 and B8.

Binds to 23S rRNA. Forms part of two intersubunit bridges in the 70S ribosome. The protein is Large ribosomal subunit protein uL14 of Thermosynechococcus vestitus (strain NIES-2133 / IAM M-273 / BP-1).